The following is a 146-amino-acid chain: ATP synthase F(0) complex subunit C2, mitochondrial (146 aa).

The N-terminal 71 residues, 1–71, are a transit peptide targeting the mitochondrion; sequence MYACSKFVST…RSFQTSAISR (71 aa). A helical transmembrane segment spans residues 87–107; the sequence is VGVAGSGAGIGTVFGSLIIGY. At K114 the chain carries N6,N6,N6-trimethyllysine. Residues 122–142 traverse the membrane as a helical segment; the sequence is ILGFALSEAMGLFCLMVAFLI.

This sequence belongs to the ATPase C chain family. F-type ATPases have 2 components, CF(1) - the catalytic core - and CF(0) - the membrane proton channel. CF(1) has five subunits: alpha(3), beta(3), gamma(1), delta(1), epsilon(1). CF(0) has three main subunits: a, b and c. Interacts with DNAJC30; interaction is direct. Trimethylated by ATPSCKMT at Lys-114. Methylation is required for proper incorporation of the C subunit into the ATP synthase complex and mitochondrial respiration.

The protein localises to the mitochondrion membrane. Mitochondrial membrane ATP synthase (F(1)F(0) ATP synthase or Complex V) produces ATP from ADP in the presence of a proton gradient across the membrane which is generated by electron transport complexes of the respiratory chain. F-type ATPases consist of two structural domains, F(1) - containing the extramembraneous catalytic core and F(0) - containing the membrane proton channel, linked together by a central stalk and a peripheral stalk. During catalysis, ATP synthesis in the catalytic domain of F(1) is coupled via a rotary mechanism of the central stalk subunits to proton translocation. Part of the complex F(0) domain. A homomeric c-ring of probably 10 subunits is part of the complex rotary element. The polypeptide is ATP synthase F(0) complex subunit C2, mitochondrial (Mus musculus (Mouse)).